The chain runs to 394 residues: Chaperone protein DnaJ (394 aa).

In terms of domain architecture, J spans 4 to 68; it reads DYYEILGVSR…ELKARYDRFG (65 aa). The CR-type zinc finger occupies 136 to 218; it reads GGEKQIRISH…CNGEGLAQTT (83 aa). Zn(2+) contacts are provided by C149, C152, C166, C169, C192, C195, C206, and C209. 4 CXXCXGXG motif repeats span residues 149 to 156, 166 to 173, 192 to 199, and 206 to 213; these read CNVCGGSG, CPTCGGSG, and CYNCNGEG.

Belongs to the DnaJ family. Homodimer. Requires Zn(2+) as cofactor.

The protein localises to the cytoplasm. In terms of biological role, participates actively in the response to hyperosmotic and heat shock by preventing the aggregation of stress-denatured proteins and by disaggregating proteins, also in an autonomous, DnaK-independent fashion. Unfolded proteins bind initially to DnaJ; upon interaction with the DnaJ-bound protein, DnaK hydrolyzes its bound ATP, resulting in the formation of a stable complex. GrpE releases ADP from DnaK; ATP binding to DnaK triggers the release of the substrate protein, thus completing the reaction cycle. Several rounds of ATP-dependent interactions between DnaJ, DnaK and GrpE are required for fully efficient folding. Also involved, together with DnaK and GrpE, in the DNA replication of plasmids through activation of initiation proteins. This Synechococcus sp. (strain JA-2-3B'a(2-13)) (Cyanobacteria bacterium Yellowstone B-Prime) protein is Chaperone protein DnaJ.